Consider the following 323-residue polypeptide: tRNA U34 carboxymethyltransferase (323 aa).

Carboxy-S-adenosyl-L-methionine is bound by residues lysine 91, tryptophan 105, lysine 110, glycine 130, 181-182 (IE), methionine 196, tyrosine 200, and arginine 315.

The protein belongs to the class I-like SAM-binding methyltransferase superfamily. CmoB family. Homotetramer.

It catalyses the reaction carboxy-S-adenosyl-L-methionine + 5-hydroxyuridine(34) in tRNA = 5-carboxymethoxyuridine(34) in tRNA + S-adenosyl-L-homocysteine + H(+). Its function is as follows. Catalyzes carboxymethyl transfer from carboxy-S-adenosyl-L-methionine (Cx-SAM) to 5-hydroxyuridine (ho5U) to form 5-carboxymethoxyuridine (cmo5U) at position 34 in tRNAs. The chain is tRNA U34 carboxymethyltransferase from Yersinia pseudotuberculosis serotype O:1b (strain IP 31758).